Here is a 257-residue protein sequence, read N- to C-terminus: Diacetyl reductase [(S)-acetoin forming] (257 aa).

6-30 (IITGAAGGLGKGIAERLANDGFNIV) serves as a coordination point for NAD(+). Ser139 serves as a coordination point for substrate. Catalysis depends on Tyr152, which acts as the Proton acceptor. Lys156 is a catalytic residue.

This sequence belongs to the short-chain dehydrogenases/reductases (SDR) family.

The catalysed reaction is (S)-acetoin + NAD(+) = diacetyl + NADH + H(+). Its function is as follows. Catalyzes the irreversible reduction of 2,3-butanediol to (S)-acetoin in the presence of NADH. In Staphylococcus epidermidis (strain ATCC 12228 / FDA PCI 1200), this protein is Diacetyl reductase [(S)-acetoin forming] (butA).